Reading from the N-terminus, the 504-residue chain is uncharacterized protein (504 aa).

Residues 6–26 (NLFIIFIFLFLLSQVSAYITF) traverse the membrane as a helical segment.

This sequence to M.jannaschii MJ1506 and MJ1561.

Its subcellular location is the membrane. This is an uncharacterized protein from Methanocaldococcus jannaschii (strain ATCC 43067 / DSM 2661 / JAL-1 / JCM 10045 / NBRC 100440) (Methanococcus jannaschii).